Consider the following 160-residue polypeptide: Peptidyl-prolyl cis-trans isomerase CYP18-1 (160 aa).

The PPIase cyclophilin-type domain occupies V3–I153.

It belongs to the cyclophilin-type PPIase family. As to expression, ubiquitous.

It localises to the cytoplasm. It catalyses the reaction [protein]-peptidylproline (omega=180) = [protein]-peptidylproline (omega=0). Its function is as follows. PPIases accelerate the folding of proteins. It catalyzes the cis-trans isomerization of proline imidic peptide bonds in oligopeptides. This is Peptidyl-prolyl cis-trans isomerase CYP18-1 (CYP18-1) from Arabidopsis thaliana (Mouse-ear cress).